The sequence spans 209 residues: MTKGILGRKIGMTQVFAENGDLIPVTVIEAAPNVVLQKKTSENDGYEAIQIGFDDKREKLANKPEKGHVAKAETAPKRFVKELRGVDMDAYEVGQEVKVDIFSNGEIVDVTGTSKGKGFQGAIKRHGQSRGPMSHGSRYHRRPGSMGPVDPNRVFKGKLLPGRMGGEQITVQNLEIVKVDAERNLLLVKGNVPGAKKSLVTVKSAVKSK.

The tract at residues 118–152 (GFQGAIKRHGQSRGPMSHGSRYHRRPGSMGPVDPN) is disordered.

This sequence belongs to the universal ribosomal protein uL3 family. Part of the 50S ribosomal subunit. Forms a cluster with proteins L14 and L19.

In terms of biological role, one of the primary rRNA binding proteins, it binds directly near the 3'-end of the 23S rRNA, where it nucleates assembly of the 50S subunit. This is Large ribosomal subunit protein uL3 from Bacillus licheniformis (strain ATCC 14580 / DSM 13 / JCM 2505 / CCUG 7422 / NBRC 12200 / NCIMB 9375 / NCTC 10341 / NRRL NRS-1264 / Gibson 46).